The following is a 428-amino-acid chain: Light-independent protochlorophyllide reductase subunit N (428 aa).

[4Fe-4S] cluster contacts are provided by cysteine 30, cysteine 55, and cysteine 116.

Belongs to the BchN/ChlN family. In terms of assembly, protochlorophyllide reductase is composed of three subunits; BchL, BchN and BchB. Forms a heterotetramer of two BchB and two BchN subunits. [4Fe-4S] cluster is required as a cofactor.

The catalysed reaction is chlorophyllide a + oxidized 2[4Fe-4S]-[ferredoxin] + 2 ADP + 2 phosphate = protochlorophyllide a + reduced 2[4Fe-4S]-[ferredoxin] + 2 ATP + 2 H2O. The protein operates within porphyrin-containing compound metabolism; bacteriochlorophyll biosynthesis (light-independent). In terms of biological role, component of the dark-operative protochlorophyllide reductase (DPOR) that uses Mg-ATP and reduced ferredoxin to reduce ring D of protochlorophyllide (Pchlide) to form chlorophyllide a (Chlide). This reaction is light-independent. The NB-protein (BchN-BchB) is the catalytic component of the complex. This is Light-independent protochlorophyllide reductase subunit N from Bradyrhizobium sp. (strain BTAi1 / ATCC BAA-1182).